A 128-amino-acid chain; its full sequence is Small ribosomal subunit protein uS9c (128 aa).

Belongs to the universal ribosomal protein uS9 family.

It localises to the plastid. The sequence is that of Small ribosomal subunit protein uS9c (rps9) from Euglena longa (Euglenophycean alga).